The sequence spans 322 residues: 4-hydroxy-3-methylbut-2-enyl diphosphate reductase (322 aa).

Residue cysteine 15 participates in [4Fe-4S] cluster binding. Residues histidine 44 and histidine 77 each coordinate (2E)-4-hydroxy-3-methylbut-2-enyl diphosphate. Residues histidine 44 and histidine 77 each coordinate dimethylallyl diphosphate. Positions 44 and 77 each coordinate isopentenyl diphosphate. Cysteine 99 is a [4Fe-4S] cluster binding site. Histidine 127 contacts (2E)-4-hydroxy-3-methylbut-2-enyl diphosphate. Histidine 127 contacts dimethylallyl diphosphate. Histidine 127 is an isopentenyl diphosphate binding site. The Proton donor role is filled by glutamate 129. Threonine 168 provides a ligand contact to (2E)-4-hydroxy-3-methylbut-2-enyl diphosphate. Cysteine 198 lines the [4Fe-4S] cluster pocket. (2E)-4-hydroxy-3-methylbut-2-enyl diphosphate contacts are provided by serine 226, serine 227, asparagine 228, and serine 270. Dimethylallyl diphosphate contacts are provided by serine 226, serine 227, asparagine 228, and serine 270. 4 residues coordinate isopentenyl diphosphate: serine 226, serine 227, asparagine 228, and serine 270.

The protein belongs to the IspH family. It depends on [4Fe-4S] cluster as a cofactor.

It catalyses the reaction isopentenyl diphosphate + 2 oxidized [2Fe-2S]-[ferredoxin] + H2O = (2E)-4-hydroxy-3-methylbut-2-enyl diphosphate + 2 reduced [2Fe-2S]-[ferredoxin] + 2 H(+). The enzyme catalyses dimethylallyl diphosphate + 2 oxidized [2Fe-2S]-[ferredoxin] + H2O = (2E)-4-hydroxy-3-methylbut-2-enyl diphosphate + 2 reduced [2Fe-2S]-[ferredoxin] + 2 H(+). Its pathway is isoprenoid biosynthesis; dimethylallyl diphosphate biosynthesis; dimethylallyl diphosphate from (2E)-4-hydroxy-3-methylbutenyl diphosphate: step 1/1. It functions in the pathway isoprenoid biosynthesis; isopentenyl diphosphate biosynthesis via DXP pathway; isopentenyl diphosphate from 1-deoxy-D-xylulose 5-phosphate: step 6/6. Catalyzes the conversion of 1-hydroxy-2-methyl-2-(E)-butenyl 4-diphosphate (HMBPP) into a mixture of isopentenyl diphosphate (IPP) and dimethylallyl diphosphate (DMAPP). Acts in the terminal step of the DOXP/MEP pathway for isoprenoid precursor biosynthesis. The chain is 4-hydroxy-3-methylbut-2-enyl diphosphate reductase from Neisseria meningitidis serogroup A / serotype 4A (strain DSM 15465 / Z2491).